Consider the following 196-residue polypeptide: Sulfur-rich protein (196 aa).

Transmembrane regions (helical) follow at residues Val-34 to Trp-54, Ile-76 to Phe-96, and Phe-105 to Phe-125.

The protein resides in the membrane. This chain is Sulfur-rich protein (srp), found in Chlamydia pneumoniae (Chlamydophila pneumoniae).